The sequence spans 92 residues: Small ribosomal subunit protein uS19 (92 aa).

The protein belongs to the universal ribosomal protein uS19 family.

In terms of biological role, protein S19 forms a complex with S13 that binds strongly to the 16S ribosomal RNA. The sequence is that of Small ribosomal subunit protein uS19 from Vibrio campbellii (strain ATCC BAA-1116).